The primary structure comprises 118 residues: MARFVALVLLGLLSLSGLDAIQRPPKIQVYSRHPPEDGKPNYLNCYVYGFHPPQIEIDLLKNGEKIKSEQSDLSFSKDWSFYLLSHAEFTPNSKDQYSCRVKHVTLEQPRIVKWDRDL.

The N-terminal stretch at 1–20 (MARFVALVLLGLLSLSGLDA) is a signal peptide. One can recognise an Ig-like C1-type domain in the interval 25 to 112 (PKIQVYSRHP…HVTLEQPRIV (88 aa)). A disulfide bridge links Cys45 with Cys99.

Belongs to the beta-2-microglobulin family. As to quaternary structure, heterodimer of an alpha chain and a beta chain. Beta-2-microglobulin is the beta-chain of major histocompatibility complex class I molecules. Forms a heterotrimer with MR1 and a metabolite antigen.

It is found in the secreted. Functionally, component of the class I major histocompatibility complex (MHC). Involved in the presentation of peptide antigens to the immune system. The chain is Beta-2-microglobulin (B2M) from Bos taurus (Bovine).